The following is a 445-amino-acid chain: Exodeoxyribonuclease 7 large subunit (445 aa).

The protein belongs to the XseA family. In terms of assembly, heterooligomer composed of large and small subunits.

The protein resides in the cytoplasm. The enzyme catalyses Exonucleolytic cleavage in either 5'- to 3'- or 3'- to 5'-direction to yield nucleoside 5'-phosphates.. In terms of biological role, bidirectionally degrades single-stranded DNA into large acid-insoluble oligonucleotides, which are then degraded further into small acid-soluble oligonucleotides. This chain is Exodeoxyribonuclease 7 large subunit, found in Shewanella oneidensis (strain ATCC 700550 / JCM 31522 / CIP 106686 / LMG 19005 / NCIMB 14063 / MR-1).